We begin with the raw amino-acid sequence, 239 residues long: LexA repressor (239 aa).

The segment at residues 27-47 is a DNA-binding region (H-T-H motif); it reads FDEMKDALDLASKSGIHRLIT. Active-site for autocatalytic cleavage activity residues include S159 and K197.

Belongs to the peptidase S24 family. Homodimer.

It carries out the reaction Hydrolysis of Ala-|-Gly bond in repressor LexA.. Its function is as follows. Represses a number of genes involved in the response to DNA damage (SOS response), including recA and lexA. In the presence of single-stranded DNA, RecA interacts with LexA causing an autocatalytic cleavage which disrupts the DNA-binding part of LexA, leading to derepression of the SOS regulon and eventually DNA repair. This chain is LexA repressor, found in Rhizobium radiobacter (Agrobacterium tumefaciens).